The following is a 142-amino-acid chain: Small ribosomal subunit protein uS12 (142 aa).

The protein belongs to the universal ribosomal protein uS12 family. Part of the 30S ribosomal subunit.

Functionally, with S4 and S5 plays an important role in translational accuracy. Located at the interface of the 30S and 50S subunits. This chain is Small ribosomal subunit protein uS12, found in Methanospirillum hungatei JF-1 (strain ATCC 27890 / DSM 864 / NBRC 100397 / JF-1).